The following is a 743-amino-acid chain: MSFSNREQGHAKERLLPTAKDIDALVRAEHHDPFSILGPHGDGAGGQFIRAYLPGALSVSVVDKNSGEELGPLEATETPGLFVGHFEGSRPYLLRTRWAGGEQVAEDPYSFGQLLGEMDLYLFAEGNHRDLSSCLGAQLKTVDGVDGVRFAVWAPNARRVSVVGDFNVWDGRRHPMRLRHPSGVWELFIPRLQAGELYKYEILGAHGILPLKADPMALATSLPPDTASKVASPLQIDWQDQDWMSGRRERQQHNAPLSIYELHAGSWQCELDDLGEVARQYTWPELAERLIPYVKELGFTHIELMPIMEHPFGGSWGYQLLSQFAPSARYGTPEQFGEFVNACHQAGIGVILDWVPAHFPTDTHGLAQFDGTALYEYGNPLEGFHQDWDTLIYNLGRTEVHGYMLASALHWLKHFHIDGLRVDAVASMLYRDYSRKAGEWVPNRHGGRENLEAIDFLRHLNDVVALEAPGALVIAEESTAWPGVSQSTQQGGLGFAYKWNMGWMHDSLHYIQQDPVYRAHHHNELSFGLVYAWSERFILPISHDEVVHGKHSLIDKMPGDRWQKFANLRAYLSFMWTHPGKKLLFMGCEFGQWREWNHDQQLDWYLLQYSEHKGVQKLVSDLNRLYREEPALHEQDDAPQGFQWLIGDDAINSVYAWLRWSKDGTPVLVVANFTPVPRQSYRVGVPFAGRWKELLNSDADTYAGSNYGNGGGAFTEEVASHGQALSLELNLPPLAVLILKPEV.

Aspartate 423 serves as the catalytic Nucleophile. The active-site Proton donor is glutamate 476.

The protein belongs to the glycosyl hydrolase 13 family. GlgB subfamily. In terms of assembly, monomer.

The enzyme catalyses Transfers a segment of a (1-&gt;4)-alpha-D-glucan chain to a primary hydroxy group in a similar glucan chain.. Its pathway is glycan biosynthesis; glycogen biosynthesis. Catalyzes the formation of the alpha-1,6-glucosidic linkages in glycogen by scission of a 1,4-alpha-linked oligosaccharide from growing alpha-1,4-glucan chains and the subsequent attachment of the oligosaccharide to the alpha-1,6 position. The protein is 1,4-alpha-glucan branching enzyme GlgB of Pseudomonas fluorescens (strain Pf0-1).